Here is a 94-residue protein sequence, read N- to C-terminus: DNA-directed RNA polymerase subunit omega (94 aa).

It belongs to the RNA polymerase subunit omega family. Consists of a sigma factor and the RNAP core enzyme which is composed of 2 alpha chains, 1 beta chain, 1 beta' chain and 1 subunit omega.

It catalyses the reaction RNA(n) + a ribonucleoside 5'-triphosphate = RNA(n+1) + diphosphate. Promotes RNA polymerase assembly. Latches the N- and C-terminal regions of the beta' subunit thereby facilitating its interaction with the beta and alpha subunits. The chain is DNA-directed RNA polymerase subunit omega from Shewanella violacea (strain JCM 10179 / CIP 106290 / LMG 19151 / DSS12).